A 309-amino-acid chain; its full sequence is DDRGK domain-containing protein 1 (309 aa).

Topologically, residues 1–2 are lumenal; the sequence is MD. A helical transmembrane segment spans residues 3–23; it reads LIILVGIAVALLVVIVTLYLL. Topologically, residues 24 to 309 are cytoplasmic; that stretch reads QKKNAAPETK…ISAGGGEASS (286 aa). 2 disordered regions span residues 32 to 53 and 79 to 175; these read TKVAAAPQRGVPQRAQEGVPRR and ALPA…KEER. A compositionally biased stretch (acidic residues) spans 87–96; that stretch reads DHEDEGQVDG. A compositionally biased stretch (basic and acidic residues) spans 107-175; that stretch reads LDEKMGAKKR…DAERLAKEER (69 aa). Residues 120–177 are a coiled coil; that stretch reads EAKEQKRLQREQELHDREQRKVKEAKEEAERKQQEDLEAEAERKRVDAERLAKEERER.

Belongs to the DDRGK1 family. As to quaternary structure, interacts with Atg9; the interaction is transient.

Its subcellular location is the endoplasmic reticulum membrane. Its function is as follows. Substrate adapter for ufmylation, the covalent attachment of the ubiquitin-like modifier UFM1 to substrate proteins. Required for ufmylation of Atg9; protects the nervous system during aging, possibly by stabilizing Atg9 and supporting its function. The protein is DDRGK domain-containing protein 1 of Drosophila melanogaster (Fruit fly).